A 617-amino-acid chain; its full sequence is Leucine aminopeptidase 2 (617 aa).

A peptide is bound by residues Q139 to Q141 and P271 to E276. H300 contributes to the Zn(2+) binding site. The Proton acceptor role is filled by E301. Residues H304 and E323 each contribute to the Zn(2+) site. The Proton donor role is filled by Y388.

Belongs to the peptidase M1 family. Zn(2+) is required as a cofactor.

The protein localises to the cytoplasm. The protein resides in the nucleus. The catalysed reaction is an epoxide + H2O = an ethanediol. Functionally, aminopeptidase that preferentially cleaves di- and tripeptides. Also has low epoxide hydrolase activity (in vitro). Can hydrolyze the epoxide leukotriene LTA(4) but it forms preferentially 5,6-dihydroxy-7,9,11,14-eicosatetraenoic acid rather than the cytokine leukotriene B(4) as the product compared to the homologous mammalian enzyme (in vitro). This is Leucine aminopeptidase 2 from Aspergillus terreus (strain NIH 2624 / FGSC A1156).